We begin with the raw amino-acid sequence, 264 residues long: Phosphonoacetaldehyde hydrolase (264 aa).

Asp-9 functions as the Nucleophile in the catalytic mechanism. Mg(2+) is bound by residues Asp-9 and Ala-11. Catalysis depends on Lys-50, which acts as the Schiff-base intermediate with substrate. Position 183 (Asp-183) interacts with Mg(2+).

This sequence belongs to the HAD-like hydrolase superfamily. PhnX family. In terms of assembly, homodimer. Mg(2+) is required as a cofactor.

It catalyses the reaction phosphonoacetaldehyde + H2O = acetaldehyde + phosphate + H(+). Involved in phosphonate degradation. The chain is Phosphonoacetaldehyde hydrolase from Bacillus mycoides (strain KBAB4) (Bacillus weihenstephanensis).